Reading from the N-terminus, the 1485-residue chain is Chromosome partition protein MukB (1485 aa).

34–41 (GGNGAGKS) is an ATP binding site. Coiled-coil stretches lie at residues 337-480 (LNLV…QAYQ), 509-605 (QHLA…PVWL), 780-805 (RAARENRLETLYQERDRLAERYATLS), 835-915 (EAEI…IQQH), 977-1116 (GMLT…AKAG), and 1210-1235 (EAIEQMEIELGRLTEELTAREQKLAI). The segment at 666-783 (PSGAEDARLI…EVPLFGRAAR (118 aa)) is flexible hinge.

It belongs to the SMC family. MukB subfamily. Homodimerization via its hinge domain. Binds to DNA via its C-terminal region. Interacts, and probably forms a ternary complex, with MukE and MukF via its C-terminal region. The complex formation is stimulated by calcium or magnesium. Interacts with tubulin-related protein FtsZ.

The protein resides in the cytoplasm. The protein localises to the nucleoid. Its function is as follows. Plays a central role in chromosome condensation, segregation and cell cycle progression. Functions as a homodimer, which is essential for chromosome partition. Involved in negative DNA supercoiling in vivo, and by this means organize and compact chromosomes. May achieve or facilitate chromosome segregation by condensation DNA from both sides of a centrally located replisome during cell division. This is Chromosome partition protein MukB from Yersinia pseudotuberculosis serotype O:1b (strain IP 31758).